The following is a 523-amino-acid chain: Asparagine--tRNA ligase (523 aa).

Residues 329 to 350 (SARGDTPLAARSTARTPPVRTP) form a disordered region.

It belongs to the class-II aminoacyl-tRNA synthetase family. As to quaternary structure, homodimer.

Its subcellular location is the cytoplasm. It catalyses the reaction tRNA(Asn) + L-asparagine + ATP = L-asparaginyl-tRNA(Asn) + AMP + diphosphate + H(+). The protein is Asparagine--tRNA ligase of Treponema pallidum (strain Nichols).